A 364-amino-acid polypeptide reads, in one-letter code: Protein spindle-F (364 aa).

The tract at residues 1–26 (MEASAAKITPMASSMSASGSTNSPSS) is disordered. The segment covering 9-26 (TPMASSMSASGSTNSPSS) has biased composition (low complexity). A coiled-coil region spans residues 32-114 (ALQVALQTIK…GMVSNENRRL (83 aa)). The residue at position 53 (Ser53) is a Phosphoserine. The segment at 56-75 (EENQQLREASSRSEGAPRAN) is disordered. Phosphoserine is present on residues Ser85, Ser172, and Ser202. Residues 210–243 (AKRCLDGLQELRREAMKQQQELRSVMTLLENRIA) are a coiled coil. A phosphoserine mark is found at Ser264 and Ser270. Residues 310–336 (EKTCPMCGKQYSSQVSFNAFREHVEMH) form a UBZ1-type zinc finger. Positions 313 and 316 each coordinate Zn(2+). The residue at position 325 (Ser325) is a Phosphoserine. Residues His332 and His336 each contribute to the Zn(2+) site. Ser349 is subject to Phosphoserine.

Forms homooligomers. Interacts with the dynein light chain ctp. Interacts (via C-terminus) with IKKepsilon; this leads to phosphorylation of spn-F. Forms ternary complexes with ctp and IKKepsilon; this is required for spn-F redistribution from puncta in larval neurons and for dendrite pruning. Interacts with ctp and IKKepsilon through distinct regions. Interacts (via C-terminus) with jvl. Post-translationally, phosphorylated by IKKepsilon. Phosphorylation is required for spn-F neuronal distribution and dendrite pruning and reduces spn-F homooligomerization. It does not lead to spn-F degradation. As to expression, in pupal bristles, localizes to the bristle tip throughout the elongation period (at protein level).

The protein localises to the cytoplasm. It is found in the cytoskeleton. It localises to the cell projection. The protein resides in the axon. Its subcellular location is the dendrite. The protein localises to the perikaryon. Functionally, plays a role in oocyte axis determination and microtubule organization during oogenesis. Also required for polarized organization of the bristle. Required, with jvl, for activation of the kinase IKKepsilon in the germ line. Also required for localization of IKKepsilon to the distal tip of elongating bristles by acting as an adapter linking IKKepsilon and cytoplasmic dynein. Involved in dendrite pruning in larval sensory neurons during metamorphosis. The polypeptide is Protein spindle-F (Drosophila melanogaster (Fruit fly)).